Reading from the N-terminus, the 594-residue chain is Ferredoxin--nitrite reductase, chloroplastic (594 aa).

The transit peptide at 1–32 (MASLPVNKIIPSSTTLLSSSNNNRRRNNSSIR) directs the protein to the chloroplast. Residues 13-22 (STTLLSSSNN) show a composition bias toward low complexity. The segment at 13 to 36 (STTLLSSSNNNRRRNNSSIRCQKA) is disordered. [4Fe-4S] cluster is bound by residues Cys473, Cys479, Cys514, and Cys518. Position 518 (Cys518) interacts with siroheme.

It belongs to the nitrite and sulfite reductase 4Fe-4S domain family. Monomer. Siroheme serves as cofactor. Requires [4Fe-4S] cluster as cofactor.

It is found in the plastid. The protein localises to the chloroplast. It carries out the reaction 6 oxidized [2Fe-2S]-[ferredoxin] + NH4(+) + 2 H2O = nitrite + 6 reduced [2Fe-2S]-[ferredoxin] + 8 H(+). The protein operates within nitrogen metabolism; nitrate reduction (assimilation). The protein is Ferredoxin--nitrite reductase, chloroplastic (NIR) of Spinacia oleracea (Spinach).